The sequence spans 242 residues: Probable ABC transporter ATP-binding protein PEB1C (242 aa).

Residues 2-236 (IELKNVNKYY…PKTERARLFL (235 aa)) enclose the ABC transporter domain. 34–41 (GPSGSGKS) provides a ligand contact to ATP.

Belongs to the ABC transporter superfamily.

The protein resides in the cell inner membrane. Most probably involved, with PEB1, in a binding-protein-dependent transport system for an amino acid. Probably responsible for energy coupling to the transport system. This chain is Probable ABC transporter ATP-binding protein PEB1C (peb1C), found in Campylobacter jejuni subsp. jejuni serotype O:23/36 (strain 81-176).